Here is a 404-residue protein sequence, read N- to C-terminus: Serine/threonine transporter SstT (404 aa).

The next 8 helical transmembrane spans lie at 17–37 (IGIGVVIGVMLGILAPDLTGF), 39–59 (ILGKLFVGGLKAIAPLLVFAL), 75–95 (MTLIIVLYLFGTFASALVAVL), 138–158 (ALATANYIGVLSWAIIFGLAL), 179–199 (IVVWIINLAPIGIMSLVFTTI), 212–232 (FLILVLVGTMVFVALVVNPLI), 287–307 (IPLGATINMGGAAITINVLTL), and 313–333 (FGIPIDFLTALLLSVVAAVSA).

This sequence belongs to the dicarboxylate/amino acid:cation symporter (DAACS) (TC 2.A.23) family.

It is found in the cell membrane. It catalyses the reaction L-serine(in) + Na(+)(in) = L-serine(out) + Na(+)(out). The catalysed reaction is L-threonine(in) + Na(+)(in) = L-threonine(out) + Na(+)(out). In terms of biological role, involved in the import of serine and threonine into the cell, with the concomitant import of sodium (symport system). The chain is Serine/threonine transporter SstT from Streptococcus pyogenes serotype M2 (strain MGAS10270).